We begin with the raw amino-acid sequence, 314 residues long: DNA-directed RNA polymerase subunit alpha (314 aa).

The tract at residues 1-228 (MIEFEKPNIH…DHLSIFVNLT (228 aa)) is alpha N-terminal domain (alpha-NTD). The interval 245–314 (KEKMLEMTIE…DLGLSLRKED (70 aa)) is alpha C-terminal domain (alpha-CTD).

This sequence belongs to the RNA polymerase alpha chain family. In terms of assembly, homodimer. The RNAP catalytic core consists of 2 alpha, 1 beta, 1 beta' and 1 omega subunit. When a sigma factor is associated with the core the holoenzyme is formed, which can initiate transcription.

The enzyme catalyses RNA(n) + a ribonucleoside 5'-triphosphate = RNA(n+1) + diphosphate. Its function is as follows. DNA-dependent RNA polymerase catalyzes the transcription of DNA into RNA using the four ribonucleoside triphosphates as substrates. This chain is DNA-directed RNA polymerase subunit alpha, found in Lactiplantibacillus plantarum (strain ATCC BAA-793 / NCIMB 8826 / WCFS1) (Lactobacillus plantarum).